The sequence spans 354 residues: UPF0283 membrane protein plu2581 (354 aa).

3 helical membrane-spanning segments follow: residues 71 to 91 (MVYGSLMLLGLSAVAQFVQWI), 101 to 121 (SALGVAAAGSMIVFAGIGSLV), and 214 to 234 (ESALMIAVSPLAIVDMAFIAW).

The protein belongs to the UPF0283 family.

The protein resides in the cell inner membrane. The chain is UPF0283 membrane protein plu2581 from Photorhabdus laumondii subsp. laumondii (strain DSM 15139 / CIP 105565 / TT01) (Photorhabdus luminescens subsp. laumondii).